The primary structure comprises 54 residues: Ovomucoid (54 aa).

The 51-residue stretch at 4-54 (VNCSDYPKPVCSLLYMPLCGSDNKTYGNKCNFCNAVADSNGTLTLSHFGKC) folds into the Kazal-like domain. Disulfide bonds link C6–C36, C14–C33, and C22–C54. A glycan (N-linked (GlcNAc...) asparagine) is linked at N43.

The protein resides in the secreted. The chain is Ovomucoid from Geococcyx californianus (Greater roadrunner).